A 261-amino-acid polypeptide reads, in one-letter code: uncharacterized protein (261 aa).

The region spanning 15–75 is the HTH tetR-type domain; that stretch reads SINPEDIISG…AMTDRALSKY (61 aa). Residues 38–57 constitute a DNA-binding region (H-T-H motif); that stretch reads SMPLLGKHLGVGVTSIYWYF. The disordered stretch occupies residues 234–261; that stretch reads AAGEVAVRRPTATADAPTPGARAKAVAR. Low complexity predominate over residues 241-261; that stretch reads RRPTATADAPTPGARAKAVAR.

This is an uncharacterized protein from Mycobacterium bovis (strain ATCC BAA-935 / AF2122/97).